We begin with the raw amino-acid sequence, 565 residues long: DNA-dependent metalloprotease SPRTN (565 aa).

Residues 23–130 enclose the SprT-like domain; sequence RALFLEFNDT…RTGANISVYH (108 aa). Position 88 (H88) interacts with Zn(2+). The active site involves E89. Zn(2+)-binding residues include H92 and H107. Residues 191-219 are disordered; the sequence is EPENYPQKRKRKNDPTISEVNSSSHVKGK. A compositionally biased stretch (polar residues) spans 205–215; sequence PTISEVNSSSH. The SHP-box signature appears at 231–239; the sequence is FSGTGYKLF. The short motif at 288–295 is the PIP-box element; sequence STPAQSIL. A disordered region spans residues 349 to 389; sequence TLPSPSIQSTSQKPQKDISFGFTLPSQSFPSTSPGSNSENK. 2 stretches are compositionally biased toward polar residues: residues 351 to 361 and 372 to 386; these read PSPSIQSTSQK and LPSQ…GSNS. A UBZ4-type 1 zinc finger spans residues 436 to 463; the sequence is KVSCPVCGTEVLECKINDHLDTCTSSGP. C439, C442, H454, and C458 together coordinate Zn(2+). Positions 476 to 499 match the Nuclear localization signal motif; it reads QSFPSTSQGSNSAIKEPLYKKLQI. Residues 537–564 form a UBZ4-type 2 zinc finger; it reads KVCCPVCGTDVLQDKINDHLDTCLQNCN. The Zn(2+) site is built by C540, C543, H555, and C559.

The protein belongs to the Spartan family. Homodimer. It depends on Zn(2+) as a cofactor. Autocatalytically cleaved in response to double-stranded DNA-binding: autocatalytic cleavage takes place in trans and leads to inactivation.

It is found in the nucleus. Its subcellular location is the chromosome. DNA-binding activates the protease activity: single-stranded DNA-binding specifically activates ability to cleave covalent DNA-protein cross-links (DPCs). In contrast, double-stranded DNA-binding specifically activates autocatalytic cleavage, and subsequent inactivation. In terms of biological role, DNA-dependent metalloendopeptidase that mediates the proteolytic cleavage of covalent DNA-protein cross-links (DPCs) during DNA synthesis, thereby playing a key role in maintaining genomic integrity. DPCs are highly toxic DNA lesions that interfere with essential chromatin transactions, such as replication and transcription, and which are induced by reactive agents, such as UV light or formaldehyde. Associates with the DNA replication machinery and specifically removes DPCs during DNA synthesis. Catalyzes proteolytic cleavage of the hmces DNA-protein cross-link following unfolding by the brip1/fancj helicase. Acts as a pleiotropic protease for DNA-binding proteins cross-linked with DNA, such as top1, top2a, histones H3 and H4. Mediates degradation of DPCs that are not ubiquitinated, while it is not able to degrade ubiquitinated DPCs. SPRTN activation requires polymerase collision with DPCs followed by helicase bypass of DPCs. May also act as a 'reader' of ubiquitinated pcna: facilitates chromatin association of rad18 and is required for efficient pcna monoubiquitination, promoting a feed-forward loop to enhance pcna ubiquitination and translesion DNA synthesis. Acts as a regulator of translesion DNA synthesis by recruiting vcp/p97 to sites of DNA damage. The chain is DNA-dependent metalloprotease SPRTN from Xenopus laevis (African clawed frog).